An 86-amino-acid chain; its full sequence is MARVTVEDCLHAVDNRFELVLVASKRAHQLAKGVSEPLVEVNNDKPTVLALREIAAGLVTKDILNQPDHHFATNSLDLALSGGQGF.

Belongs to the RNA polymerase subunit omega family. In terms of assembly, the RNAP catalytic core consists of 2 alpha, 1 beta, 1 beta' and 1 omega subunit. When a sigma factor is associated with the core the holoenzyme is formed, which can initiate transcription.

It carries out the reaction RNA(n) + a ribonucleoside 5'-triphosphate = RNA(n+1) + diphosphate. Its function is as follows. Promotes RNA polymerase assembly. Latches the N- and C-terminal regions of the beta' subunit thereby facilitating its interaction with the beta and alpha subunits. The polypeptide is DNA-directed RNA polymerase subunit omega (Psychrobacter sp. (strain PRwf-1)).